The following is a 457-amino-acid chain: PE-PGRS family protein PE_PGRS18 (457 aa).

The PE domain maps to 1-92; it reads MSFVNVAPQL…SSTYAVAEAA (92 aa). NHL repeat units lie at residues 291-321, 333-363, 379-404, and 419-447; these read FNDP…IDPV, NGPS…IDPN, GVAV…IDPA, and PTGV…ITGE.

This sequence belongs to the mycobacterial PE family. PGRS subfamily.

It is found in the secreted. The protein resides in the cell wall. In terms of biological role, enhances mycobacterial intracellular survival, probably via altering host macrophage cytokine profiling and attenuating the cell apoptosis. Could be required for host endothelial-cell invasion. Functionally, expression in Mycobacterium smegmatis, a nonpathogenic species naturally deficient in PE_PGRS genes, results in alteration of the production of host cytokines, including IL-6, IL-1beta, IL-10 and IL-12p40, as well as enhanced survival within macrophages largely via attenuating the apoptosis of macrophages. This is PE-PGRS family protein PE_PGRS18 from Mycobacterium tuberculosis (strain ATCC 25618 / H37Rv).